The following is a 615-amino-acid chain: MPMTDAFQVRVPRVSSSTAGDIAASSITTRGALPRPGGMPVSMSRGTSPEVALIGVYEISKILTAPRRLEVTLANVVNVLSSMLQMRHGMICILDSEGDPDMVATTGWTPEMAGQIRAHVPQKAIDQIVATQMPLVVQDVTADPLFAGHEDLFGPPEEATVSFIGVPIKADHHVMGTLSIDRIWDGTARFRFDEDVRFLTMVANLVGQTVRLHKLVASDRDRLIAQTHRLEKALREEKSGAEPEVAEAANGSAMGIVGDSPLVKRLIATAQVVARSNSTVLLRGESGTGKELFARAIHELSPRKGKPFVKVNCAALPESVLESELFGHEKGAFTGALNMRQGRFELAHGGTLFLDEIGEITPAFQAKLLRVLQEGEFERVGGNRTLKVDVRLVCATNKNLEEAVSKGEFRADLYYRIHVVPLILPPLRERPGDIPKLAKNFLDRFNKENKLHMMLSAPAIDVLRRCYFPGNVRELENCIRRTATLAHDAVITPHDFACDSGQCLSAMLWKGSAPKPVMPHVPPAPTPLTPLSPAPLATAAPAAASPAPAADSLPVTCPGTEACPAVPPRQSEKEQLLQAMERSGWVQAKAARLLNLTPRQVGYALRKYDIDIKRF.

The region spanning 68–210 is the GAF domain; that stretch reads RLEVTLANVV…MVANLVGQTV (143 aa). In terms of domain architecture, Sigma-54 factor interaction spans 256–484; that stretch reads IVGDSPLVKR…LENCIRRTAT (229 aa). Residues 284 to 291 and 347 to 356 each bind ATP; these read GESGTGKE and AHGGTLFLDE. The inter-domain linker stretch occupies residues 485-572; that stretch reads LAHDAVITPH…CPAVPPRQSE (88 aa). Cys-498 and Cys-503 together coordinate a divalent metal cation. The C-terminal DNA-binding domain stretch occupies residues 573–615; sequence KEQLLQAMERSGWVQAKAARLLNLTPRQVGYALRKYDIDIKRF. Positions 587–606 form a DNA-binding region, H-T-H motif; that stretch reads QAKAARLLNLTPRQVGYALR.

As to quaternary structure, interacts with sigma-54.

In terms of biological role, required for activation of most nif operons, which are directly involved in nitrogen fixation. The sequence is that of Nif-specific regulatory protein (nifA) from Azorhizobium caulinodans (strain ATCC 43989 / DSM 5975 / JCM 20966 / LMG 6465 / NBRC 14845 / NCIMB 13405 / ORS 571).